The primary structure comprises 87 residues: VDVLMPNVGEITGGSMRIDDMNELMAGFKREGIDTDAYYWFIDQRKYGTCPHGGYGIGTERILAWLCDRFTVRDCSLYPRFSGRCKP.

This sequence belongs to the class-II aminoacyl-tRNA synthetase family.

It localises to the cytoplasm. The catalysed reaction is tRNA(Asn) + L-asparagine + ATP = L-asparaginyl-tRNA(Asn) + AMP + diphosphate + H(+). This chain is Asparagine--tRNA ligase, cytoplasmic (DED81), found in Saccharomyces paradoxus (Yeast).